The sequence spans 49 residues: MRVNITLACTECGERNYITKKNKRNNPDRVEFKKYCSRDKKQTVHRETK.

The protein belongs to the bacterial ribosomal protein bL33 family.

This chain is Large ribosomal subunit protein bL33B, found in Bacillus pumilus (strain SAFR-032).